The chain runs to 388 residues: Queuine tRNA-ribosyltransferase (388 aa).

The Proton acceptor role is filled by Asp-91. Residues 91–95 (DSGGY), Asp-145, Gln-190, and Gly-217 contribute to the substrate site. Positions 248–254 (GVGAPED) are RNA binding. The active-site Nucleophile is Asp-267. Residues 272–276 (TRLAR) form an RNA binding; important for wobble base 34 recognition region. 4 residues coordinate Zn(2+): Cys-305, Cys-307, Cys-310, and His-336.

It belongs to the queuine tRNA-ribosyltransferase family. In terms of assembly, homodimer. Within each dimer, one monomer is responsible for RNA recognition and catalysis, while the other monomer binds to the replacement base PreQ1. Requires Zn(2+) as cofactor.

The enzyme catalyses 7-aminomethyl-7-carbaguanine + guanosine(34) in tRNA = 7-aminomethyl-7-carbaguanosine(34) in tRNA + guanine. It functions in the pathway tRNA modification; tRNA-queuosine biosynthesis. Catalyzes the base-exchange of a guanine (G) residue with the queuine precursor 7-aminomethyl-7-deazaguanine (PreQ1) at position 34 (anticodon wobble position) in tRNAs with GU(N) anticodons (tRNA-Asp, -Asn, -His and -Tyr). Catalysis occurs through a double-displacement mechanism. The nucleophile active site attacks the C1' of nucleotide 34 to detach the guanine base from the RNA, forming a covalent enzyme-RNA intermediate. The proton acceptor active site deprotonates the incoming PreQ1, allowing a nucleophilic attack on the C1' of the ribose to form the product. After dissociation, two additional enzymatic reactions on the tRNA convert PreQ1 to queuine (Q), resulting in the hypermodified nucleoside queuosine (7-(((4,5-cis-dihydroxy-2-cyclopenten-1-yl)amino)methyl)-7-deazaguanosine). In Dictyoglomus turgidum (strain DSM 6724 / Z-1310), this protein is Queuine tRNA-ribosyltransferase.